A 458-amino-acid polypeptide reads, in one-letter code: Zinc finger protein 239 (458 aa).

Residue Lys108 forms a Glycyl lysine isopeptide (Lys-Gly) (interchain with G-Cter in SUMO2) linkage. Ser191 is subject to Phosphoserine. 9 consecutive C2H2-type zinc fingers follow at residues Tyr207–His229, Tyr235–His257, Tyr263–His285, Tyr291–His313, Tyr319–His341, Tyr347–His369, Tyr375–His397, Tyr403–His425, and Tyr431–His453.

This sequence belongs to the krueppel C2H2-type zinc-finger protein family.

The protein resides in the nucleus. May be involved in transcriptional regulation. The protein is Zinc finger protein 239 (ZNF239) of Homo sapiens (Human).